The following is a 1495-amino-acid chain: Terminal uridylyltransferase 7 (1495 aa).

Disordered regions lie at residues 1–30 (MGDTAKPYFVKRTKDRGTMDDDDFRRGHPQ), 43–69 (HGSKMEKGLQKKKITPGNYGNTPRKGP), 89–140 (WMND…EDGY), and 162–205 (LETT…PVID). Positions 15–26 (DRGTMDDDDFRR) are enriched in basic and acidic residues. Residues T57 and T64 each carry the phosphothreonine modification. 2 stretches are compositionally biased toward basic and acidic residues: residues 92-118 (DSHKDQSKRWLSDEHTGNSDNWREFKP) and 128-140 (QRKDSFQENEDGY). Phosphoserine occurs at positions 132 and 172. The span at 178–187 (QRSRPRKPRK) shows a compositional bias: basic residues. A Matrin-type zinc finger spans residues 244 to 274 (YTCRLCDVLIESIAFAHKHIKEKRHKKNIKE). The PAP-associated 1 domain maps to 551–600 (VGQLWVELLRFYALEFNLADLVISIRVKELVSRELKDWPKKRIAIEDPYS). S600 is modified (phosphoserine). Residues 734-756 (DDYKGDKVYHPETGRKNEKEKVG) are compositionally biased toward basic and acidic residues. 2 disordered regions span residues 734–757 (DDYKGDKVYHPETGRKNEKEKVGR) and 831–898 (THSV…EDDE). The segment covering 831–841 (THSVQGQTSEM) has biased composition (polar residues). Composition is skewed to acidic residues over residues 843-859 (PSDEEEEDDEEEEEEEE), 868-880 (EDEDGMANEDELD), and 887-898 (GDEDALSEEDDE). S844 is modified (phosphoserine). 2 positions are modified to phosphoserine: S893 and S939. Residues 951 to 1495 (SKLIFTKGKS…ASAKRTQQES (545 aa)) are sufficient for monouridylation activity. Residues 963–980 (VVCSLCKREGHLKKDCPE) form a CCHC-type 1 zinc finger. Residues 1047-1050 (SSKN), 1057-1060 (SDLD), N1130, K1152, 1170-1174 (SYAYT), and H1286 each bind UTP. Mg(2+) is bound by residues D1058 and D1060. Residues 1233 to 1286 (SVGQLWLGLLRFYTEEFDFKEHVISIRRKSLLTTFKKQWTSKYIVIEDPFDLNH) form the PAP-associated 2 domain. The segment at 1345–1362 (RCCRICGKIGHFMKDCPM) adopts a CCHC-type 2 zinc-finger fold. 2 disordered regions span residues 1367 to 1424 (RRRR…MRAA) and 1466 to 1495 (CPQFKGSSGSLSSKYMTQGKASAKRTQQES). The segment covering 1381-1410 (PENKEKRSKEDKEIHNKYTEREVSTKEDKP) has biased composition (basic and acidic residues). The CCHC-type 3 zinc-finger motif lies at 1451 to 1468 (KRCFICGREGHIKKECPQ). Over residues 1470–1485 (KGSSGSLSSKYMTQGK) the composition is skewed to polar residues.

It belongs to the DNA polymerase type-B-like family. Interacts with MOV10; the interaction is RNA-dependent. Requires Mg(2+) as cofactor. The cofactor is Mn(2+).

Its subcellular location is the cytoplasm. The catalysed reaction is RNA(n) + UTP = RNA(n)-3'-uridine ribonucleotide + diphosphate. In terms of biological role, uridylyltransferase that mediates the terminal uridylation of mRNAs with short (less than 25 nucleotides) poly(A) tails, hence facilitating global mRNA decay. Essential for both oocyte maturation and fertility. Through 3' terminal uridylation of mRNA, sculpts, with TUT7, the maternal transcriptome by eliminating transcripts during oocyte growth. Involved in microRNA (miRNA)-induced gene silencing through uridylation of deadenylated miRNA targets. Also functions as an integral regulator of microRNA biogenesiS using 3 different uridylation mechanisms. Acts as a suppressor of miRNA biogenesis by mediating the terminal uridylation of some miRNA precursors, including that of let-7 (pre-let-7). Uridylated pre-let-7 RNA is not processed by Dicer and undergo degradation. Pre-let-7 uridylation is strongly enhanced in the presence of LIN28A. In the absence of LIN28A, TUT7 and TUT4 monouridylate group II pre-miRNAs, which includes most of pre-let7 members, that shapes an optimal 3' end overhang for efficient processing. Add oligo-U tails to truncated pre-miRNAS with a 5' overhang which may promote rapid degradation of non-functional pre-miRNA species. Does not play a role in replication-dependent histone mRNA degradation. Due to functional redundancy between TUT4 and TUT7, the identification of the specific role of each of these proteins is difficult. TUT4 and TUT7 restrict retrotransposition of long interspersed element-1 (LINE-1) in cooperation with MOV10 counteracting the RNA chaperonne activity of L1RE1. TUT7 uridylates LINE-1 mRNAs in the cytoplasm which inhibits initiation of reverse transcription once in the nucleus, whereas uridylation by TUT4 destabilizes mRNAs in cytoplasmic ribonucleoprotein granules. The chain is Terminal uridylyltransferase 7 from Homo sapiens (Human).